A 122-amino-acid chain; its full sequence is MIQTETRLEVADNTGAREVMCIKVLGGSKRRYANIGDIIKVSVKEATPRGRVKKGEIYNAVVVRTAKGVRRQDGSLIKFDGNAAVLLNTKLEPIGTRIFGPVTRELRSERFMKIVSLAPEVL.

This sequence belongs to the universal ribosomal protein uL14 family. Part of the 50S ribosomal subunit. Forms a cluster with proteins L3 and L19. In the 70S ribosome, L14 and L19 interact and together make contacts with the 16S rRNA in bridges B5 and B8.

Its function is as follows. Binds to 23S rRNA. Forms part of two intersubunit bridges in the 70S ribosome. This Paraburkholderia phymatum (strain DSM 17167 / CIP 108236 / LMG 21445 / STM815) (Burkholderia phymatum) protein is Large ribosomal subunit protein uL14.